A 156-amino-acid chain; its full sequence is Ribosomal RNA large subunit methyltransferase H (156 aa).

S-adenosyl-L-methionine contacts are provided by residues Leu-73, Gly-104, and 123-128 (ISSMTL).

It belongs to the RNA methyltransferase RlmH family. In terms of assembly, homodimer.

The protein resides in the cytoplasm. The catalysed reaction is pseudouridine(1915) in 23S rRNA + S-adenosyl-L-methionine = N(3)-methylpseudouridine(1915) in 23S rRNA + S-adenosyl-L-homocysteine + H(+). Its function is as follows. Specifically methylates the pseudouridine at position 1915 (m3Psi1915) in 23S rRNA. The sequence is that of Ribosomal RNA large subunit methyltransferase H from Janthinobacterium sp. (strain Marseille) (Minibacterium massiliensis).